A 622-amino-acid polypeptide reads, in one-letter code: Chaperone protein HscA homolog (622 aa).

This sequence belongs to the heat shock protein 70 family.

In terms of biological role, chaperone involved in the maturation of iron-sulfur cluster-containing proteins. Has a low intrinsic ATPase activity which is markedly stimulated by HscB. This chain is Chaperone protein HscA homolog, found in Burkholderia cenocepacia (strain ATCC BAA-245 / DSM 16553 / LMG 16656 / NCTC 13227 / J2315 / CF5610) (Burkholderia cepacia (strain J2315)).